The primary structure comprises 150 residues: Globin-1 (150 aa).

The region spanning 11 to 150 (PLSDAEKNKI…MICILLSSAY (140 aa)) is the Globin domain. Residues His74 and His106 each contribute to the heme b site.

It belongs to the globin family. In terms of assembly, monomer.

The sequence is that of Globin-1 from Mordacia mordax (Southern hemisphere lamprey).